The primary structure comprises 277 residues: 3-methyl-2-oxobutanoate hydroxymethyltransferase (277 aa).

Mg(2+) contacts are provided by aspartate 53 and aspartate 96. Residues 53 to 54 (DS), aspartate 96, and lysine 126 contribute to the 3-methyl-2-oxobutanoate site. Glutamate 128 contributes to the Mg(2+) binding site. The Proton acceptor role is filled by glutamate 195.

The protein belongs to the PanB family. In terms of assembly, homodecamer; pentamer of dimers. Mg(2+) is required as a cofactor.

The protein resides in the cytoplasm. It carries out the reaction 3-methyl-2-oxobutanoate + (6R)-5,10-methylene-5,6,7,8-tetrahydrofolate + H2O = 2-dehydropantoate + (6S)-5,6,7,8-tetrahydrofolate. It participates in cofactor biosynthesis; (R)-pantothenate biosynthesis; (R)-pantoate from 3-methyl-2-oxobutanoate: step 1/2. In terms of biological role, catalyzes the reversible reaction in which hydroxymethyl group from 5,10-methylenetetrahydrofolate is transferred onto alpha-ketoisovalerate to form ketopantoate. In Prosthecochloris aestuarii (strain DSM 271 / SK 413), this protein is 3-methyl-2-oxobutanoate hydroxymethyltransferase.